Here is a 322-residue protein sequence, read N- to C-terminus: Epoxide hydrolase A (322 aa).

The AB hydrolase-1 domain maps to 27 to 131 (PVVILAHGFP…AVAALSVPAL (105 aa)). Residue D103 is the Nucleophile of the active site. H298 serves as the catalytic Proton acceptor.

The protein belongs to the AB hydrolase superfamily. Epoxide hydrolase family. As to quaternary structure, homodimer.

The catalysed reaction is an epoxide + H2O = an ethanediol. Functionally, could be involved in detoxification of extraneous host-cell epoxides. Catalyzes the hydrolysis of epoxide-containing substrates. This is Epoxide hydrolase A (ephA) from Mycobacterium tuberculosis (strain ATCC 25618 / H37Rv).